Reading from the N-terminus, the 123-residue chain is Small ribosomal subunit protein uS12c (123 aa).

The protein belongs to the universal ribosomal protein uS12 family. As to quaternary structure, part of the 30S ribosomal subunit.

The protein resides in the plastid. The protein localises to the chloroplast. In terms of biological role, with S4 and S5 plays an important role in translational accuracy. Located at the interface of the 30S and 50S subunits. In Pinus thunbergii (Japanese black pine), this protein is Small ribosomal subunit protein uS12c (rps12).